The following is a 77-amino-acid chain: Neurotoxin LmNaTx21.1 (77 aa).

The first 7 residues, 1-7 (LILVACL), serve as a signal peptide directing secretion. One can recognise an LCN-type CS-alpha/beta domain in the interval 16–76 (KDGYPVDWNN…VEIKGYGRCR (61 aa)). 4 cysteine pairs are disulfide-bonded: Cys26-Cys75, Cys30-Cys51, Cys37-Cys58, and Cys41-Cys60.

This sequence belongs to the long (4 C-C) scorpion toxin superfamily. Sodium channel inhibitor family. Alpha subfamily. In terms of tissue distribution, expressed by the venom gland.

The protein localises to the secreted. Functionally, binds voltage-independently at site-3 of voltage-gated sodium channels (Nav) and inhibits the inactivation of the activated channels, thereby blocking neuronal transmission. The chain is Neurotoxin LmNaTx21.1 from Lychas mucronatus (Chinese swimming scorpion).